A 553-amino-acid chain; its full sequence is ATP synthase F(1) complex subunit alpha, mitochondrial (553 aa).

Residues 1-43 (MLSVRIAAAVARALPRRAGLVSKNALGSSFVGTRNLHASNTRL) constitute a mitochondrion transit peptide. Phosphoserine occurs at positions 53 and 65. The residue at position 76 (Ser76) is a Phosphoserine; alternate. Ser76 carries O-linked (GlcNAc) serine; alternate glycosylation. The residue at position 106 (Ser106) is a Phosphoserine. N6-acetyllysine is present on residues Lys123, Lys126, and Lys132. The residue at position 134 (Thr134) is a Phosphothreonine. Lys161 carries the N6-acetyllysine; alternate modification. Residue Lys161 is modified to N6-succinyllysine; alternate. The residue at position 166 (Ser166) is a Phosphoserine. An N6-acetyllysine; alternate modification is found at Lys167. Lys167 is modified (N6-succinyllysine; alternate). Ser184 is subject to Phosphoserine. Residue Arg204 is modified to Omega-N-methylarginine. ATP contacts are provided by Gln215, Gly217, Lys218, Thr219, and Ser220. Thr219 contributes to the Mg(2+) binding site. N6-acetyllysine; alternate is present on residues Lys230 and Lys239. Residues Lys230 and Lys239 each carry the N6-succinyllysine; alternate modification. Position 240 is an N6-acetyllysine (Lys240). N6-acetyllysine; alternate occurs at positions 261 and 305. N6-succinyllysine; alternate is present on residues Lys261 and Lys305. Asp312 provides a ligand contact to Mg(2+). Lys427 carries the N6-acetyllysine; alternate modification. Residue Lys427 is modified to N6-succinyllysine; alternate. Lys434 bears the N6-acetyllysine mark. ATP contacts are provided by Gln473 and Gln475. N6-acetyllysine; alternate occurs at positions 498, 506, 531, and 539. Lys498, Lys506, Lys531, and Lys539 each carry N6-succinyllysine; alternate. An N6-acetyllysine modification is found at Lys541.

This sequence belongs to the ATPase alpha/beta chains family. In terms of assembly, homotrimer. Component of the ATP synthase complex composed at least of ATP5F1A/subunit alpha, ATP5F1B/subunit beta, ATP5MC1/subunit c (homooctomer), MT-ATP6/subunit a, MT-ATP8/subunit 8, ATP5ME/subunit e, ATP5MF/subunit f, ATP5MG/subunit g, ATP5MK/subunit k, ATP5MJ/subunit j, ATP5F1C/subunit gamma, ATP5F1D/subunit delta, ATP5F1E/subunit epsilon, ATP5PF/subunit F6, ATP5PB/subunit b, ATP5PD/subunit d, ATP5PO/subunit OSCP. ATP synthase complex consists of a soluble F(1) head domain (subunits alpha(3) and beta(3)) - the catalytic core - and a membrane F(0) domain - the membrane proton channel (subunits c, a, 8, e, f, g, k and j). These two domains are linked by a central stalk (subunits gamma, delta, and epsilon) rotating inside the F1 region and a stationary peripheral stalk (subunits F6, b, d, and OSCP). Interacts with ATPAF2. Interacts with HRG; the interaction occurs on the surface of T-cells and alters the cell morphology when associated with concanavalin (in vitro). Interacts with PLG (angiostatin peptide); the interaction inhibits most of the angiogenic properties of angiostatin. Interacts with BLOC1S1. Interacts with BCL2L1 isoform BCL-X(L); the interaction mediates the association of BCL2L1 isoform BCL-X(L) with the mitochondrial membrane F(1)F(0) ATP synthase and enhances neurons metabolic efficiency. Interacts with CLN5 and PPT1. Interacts with S100A1; this interaction increases F1-ATPase activity. Interacts with ABCB7; this interaction allows the regulation of cellular iron homeostasis and cellular reactive oxygen species (ROS) levels in cardiomyocytes. In terms of processing, acetylated on lysine residues. BLOC1S1 is required for acetylation. Expressed in flagella of epididymal sperm.

Its subcellular location is the mitochondrion. It is found in the mitochondrion inner membrane. It localises to the cell membrane. Its function is as follows. Subunit alpha, of the mitochondrial membrane ATP synthase complex (F(1)F(0) ATP synthase or Complex V) that produces ATP from ADP in the presence of a proton gradient across the membrane which is generated by electron transport complexes of the respiratory chain. ATP synthase complex consist of a soluble F(1) head domain - the catalytic core - and a membrane F(1) domain - the membrane proton channel. These two domains are linked by a central stalk rotating inside the F(1) region and a stationary peripheral stalk. During catalysis, ATP synthesis in the catalytic domain of F(1) is coupled via a rotary mechanism of the central stalk subunits to proton translocation. In vivo, can only synthesize ATP although its ATP hydrolase activity can be activated artificially in vitro. With the catalytic subunit beta (ATP5F1B), forms the catalytic core in the F(1) domain. Subunit alpha does not bear the catalytic high-affinity ATP-binding sites. In Rattus norvegicus (Rat), this protein is ATP synthase F(1) complex subunit alpha, mitochondrial.